A 352-amino-acid polypeptide reads, in one-letter code: DNA ADP-ribosyl glycohydrolase (352 aa).

One can recognise a Macro domain in the interval 1-155 (MITYGSGDLL…IYPPSGGSRA (155 aa)). ADP-D-ribose is bound by residues 8-9 (DL), 20-22 (TVN), 31-34 (IALQ), and Thr79. Catalysis depends on Lys80, which acts as the Nucleophile. Position 117 to 121 (117 to 121 (GVGNG)) interacts with ADP-D-ribose. The interaction with DarT stretch occupies residues 164–352 (MTWGRAVILE…VALDRILMTA (189 aa)).

This sequence belongs to the DarG ADP-ribosyl glycohydrolase family. In terms of assembly, interacts (via C-terminus) with cognate toxin DarT; this heterodimeric complex neutralizes the toxic effect of DarT by preventing ssDNA binding to DarT and consequently inactivating the toxin by direct protein-protein interactions.

It catalyses the reaction an N-(ADP-alpha-D-ribosyl)-thymidine in DNA + H2O = a thymidine in DNA + ADP-D-ribose. In terms of biological role, antitoxin component of the hybrid type II/IV toxin-antitoxin (TA) system DarTG, which plays a crucial role in controlling bacterial growth and bacteriophage infection. De-ADP-ribosylates DNA (probably) modified on thymidine by its cognate toxin DarT, which neutralizes the activity of cognate toxin DarT. The polypeptide is DNA ADP-ribosyl glycohydrolase (Mycobacterium bovis (strain BCG / Pasteur 1173P2)).